A 463-amino-acid polypeptide reads, in one-letter code: L-seryl-tRNA(Sec) selenium transferase (463 aa).

An N6-(pyridoxal phosphate)lysine modification is found at lysine 295.

It belongs to the SelA family. In terms of assembly, homodecamer; pentamer of dimers. Binds only one seryl-tRNA(Sec) per dimer. Pyridoxal 5'-phosphate serves as cofactor.

It is found in the cytoplasm. It carries out the reaction L-seryl-tRNA(Sec) + selenophosphate + H(+) = L-selenocysteinyl-tRNA(Sec) + phosphate. It functions in the pathway aminoacyl-tRNA biosynthesis; selenocysteinyl-tRNA(Sec) biosynthesis; selenocysteinyl-tRNA(Sec) from L-seryl-tRNA(Sec) (bacterial route): step 1/1. Its function is as follows. Converts seryl-tRNA(Sec) to selenocysteinyl-tRNA(Sec) required for selenoprotein biosynthesis. This Shigella sonnei (strain Ss046) protein is L-seryl-tRNA(Sec) selenium transferase.